A 490-amino-acid chain; its full sequence is Muscarinic acetylcholine receptor M4 (490 aa).

Residues 1-42 (MHNLSAQPWQAKMANLTYDNVTLSNRSEVAIQPPTNYKTVEL) lie on the Extracellular side of the membrane. Residues asparagine 3, asparagine 15, asparagine 20, and asparagine 25 are each glycosylated (N-linked (GlcNAc...) asparagine). The chain crosses the membrane as a helical span at residues 43 to 64 (VFIATVTGSLSLVTVVGNILVM). The Cytoplasmic segment spans residues 65-78 (LSIKVNRQLQTVNN). The helical transmembrane segment at 79–99 (YFLFSLACADLIIGVFSMNLY) threads the bilayer. At 100–116 (TVYIIKGYWPLGAVVCD) the chain is on the extracellular side. Cysteine 115 and cysteine 195 are oxidised to a cystine. A helical transmembrane segment spans residues 117 to 138 (LWLALDYVVSNASVMNLLIISF). The Cytoplasmic portion of the chain corresponds to 139–158 (DRYFCVTKPLTYPARRTTKM). Residues 159–181 (AGLMIAAAWILSFILWAPAILFW) form a helical membrane-spanning segment. The Extracellular portion of the chain corresponds to 182–203 (QFIVGKRTVHERECYIQFLSNP). Residues 204 to 226 (AVTFGTAIAAFYLPVVIMTVLYI) form a helical membrane-spanning segment. Residues 227–412 (HISLASRSRV…AAREKKVTRT (186 aa)) lie on the Cytoplasmic side of the membrane. Over residues 236–250 (VRRHKPESRKERKGK) the composition is skewed to basic residues. The disordered stretch occupies residues 236 to 343 (VRRHKPESRK…HPRVNPTSKW (108 aa)). Residues 270 to 285 (RAVEVKEEVRNGKVDD) are compositionally biased toward basic and acidic residues. 2 stretches are compositionally biased toward polar residues: residues 287-296 (PSAQTEATGQ) and 304-314 (NESSTVSMTQT). The chain crosses the membrane as a helical span at residues 413 to 433 (IFAILLAFILTWTPYNVMVLI). Over 434-447 (NTFCETCVPETVWS) the chain is Extracellular. Residues 448–467 (IGYWLCYVNSTINPACYALC) traverse the membrane as a helical segment. The Cytoplasmic segment spans residues 468–490 (NATFKKTFKHLLMCQYRNIGTAR).

Belongs to the G-protein coupled receptor 1 family. Muscarinic acetylcholine receptor subfamily. CHRM4 sub-subfamily. Expressed in heart and brain.

Its subcellular location is the cell membrane. It is found in the postsynaptic cell membrane. Functionally, the muscarinic acetylcholine receptor mediates various cellular responses, including inhibition of adenylate cyclase, breakdown of phosphoinositides and modulation of potassium channels through the action of G proteins. Primary transducing effect is inhibition of adenylate cyclase. May couple to multiple functional responses in cell lines. In Gallus gallus (Chicken), this protein is Muscarinic acetylcholine receptor M4 (CHRM4).